The primary structure comprises 419 residues: 3-isopropylmalate dehydratase large subunit (419 aa).

The [4Fe-4S] cluster site is built by Cys300, Cys360, and Cys363.

The protein belongs to the aconitase/IPM isomerase family. LeuC type 2 subfamily. Heterodimer of LeuC and LeuD. [4Fe-4S] cluster serves as cofactor.

The enzyme catalyses (2R,3S)-3-isopropylmalate = (2S)-2-isopropylmalate. It participates in amino-acid biosynthesis; L-leucine biosynthesis; L-leucine from 3-methyl-2-oxobutanoate: step 2/4. In terms of biological role, catalyzes the isomerization between 2-isopropylmalate and 3-isopropylmalate, via the formation of 2-isopropylmaleate. The chain is 3-isopropylmalate dehydratase large subunit from Desulfatibacillum aliphaticivorans.